Reading from the N-terminus, the 472-residue chain is Uronate isomerase (472 aa).

This sequence belongs to the metallo-dependent hydrolases superfamily. Uronate isomerase family.

It carries out the reaction D-glucuronate = D-fructuronate. It catalyses the reaction aldehydo-D-galacturonate = keto-D-tagaturonate. The protein operates within carbohydrate metabolism; pentose and glucuronate interconversion. The polypeptide is Uronate isomerase (Xanthomonas euvesicatoria pv. vesicatoria (strain 85-10) (Xanthomonas campestris pv. vesicatoria)).